A 403-amino-acid chain; its full sequence is 3-hydroxy-3-methylglutaryl-coenzyme A reductase (403 aa).

Residues glutamate 99 and aspartate 303 each act as charge relay system in the active site. Histidine 398 functions as the Proton donor in the catalytic mechanism.

It belongs to the HMG-CoA reductase family.

The enzyme catalyses (R)-mevalonate + 2 NADP(+) + CoA = (3S)-3-hydroxy-3-methylglutaryl-CoA + 2 NADPH + 2 H(+). It functions in the pathway metabolic intermediate biosynthesis; (R)-mevalonate biosynthesis; (R)-mevalonate from acetyl-CoA: step 3/3. Its activity is regulated as follows. Is competitively inhibited by (R)-HMG-CoA and lovastatin (formerly called mevinolin). Its function is as follows. Catalyzes the NADPH-dependent reductive deacylation of (S)-3-hydroxy-3-methylglutaryl-CoA (HMG-CoA) to (R)-mevalonate. Functions in the mevalonate (MVA) pathway leading to isopentenyl diphosphate (IPP), a key precursor for the biosynthesis of isoprenoid compounds such as archaeal membrane lipids. Is also able to catalyze the reduction of mevaldehyde to mevalonate and the oxidative acylation of mevaldehyde to HMG-CoA. This chain is 3-hydroxy-3-methylglutaryl-coenzyme A reductase (hmgA), found in Haloferax volcanii (strain ATCC 29605 / DSM 3757 / JCM 8879 / NBRC 14742 / NCIMB 2012 / VKM B-1768 / DS2) (Halobacterium volcanii).